A 591-amino-acid polypeptide reads, in one-letter code: ADP-ribosylating toxin CARDS (591 aa).

Residues 1 to 205 (MPNPVRFVYR…LPTPGIATPV (205 aa)) are mono-ADP ribosyltransferase (mART) domain. The interval 206–256 (HLSIPQAASVADVSEGTSASLSFACPDWSPPSSNGENPLDKCIAEKIDNYN) is NAD(+)-binding pocket. C230 and C247 form a disulfide bridge. The KELED motif, involved in host ER trafficking, solvent exposed in the crystal structure motif lies at 268 to 272 (KELED). The segment at 273–439 (TPVYLRGIKT…QFVTMRAAST (167 aa)) is D2 domain. Residues 440–591 (FFVDVQLGWY…ILVKDGFDRF (152 aa)) are D3 domain.

It belongs to the bacterial exotoxin subunit A family. As to quaternary structure, monomer. Binds to host (human) pulmonary surfactant-associated protein A1 (SFTPA1), the major mammalian protein component of pulmonary surfactant. Binds to host (human) surface annexin A2 (ANXA2) on the cell surface; anti-ANXA2 antibodies decrease binding to cells. Interacts with cytosolic host (human) NLRP3, which it ADP-ribosylates in vitro. Post-translationally, 8 hours after treatment of HeLa cells with purified protein, a substantial amount is processed to 2 nearly equal-sized fragments. The disulfide bond between Cys-230 and Cys-247 is required to for the toxin to exert its mART and vacuolating activities within target cells, and for protein processing. Acidic pH in the endosome and retrograde transport are required for toxin cleavage, which is required for both toxin activities. Trypsin treatment under mild conditions leads to cleavage at Lys-305 and Lys-307; the 2 proteins fragments remain associated and can be internalized and vacuolate HeLa cells.

Its subcellular location is the cell membrane. The protein localises to the cytoplasm. It is found in the cell surface. The protein resides in the cell projection. It localises to the attachment organelle. Its subcellular location is the host cytoplasm. The protein localises to the host cytosol. It is found in the host endoplasmic reticulum. With respect to regulation, in vitro ADP-ribosylation is enhanced by dithiotheritol. In terms of biological role, the main virulence factor for this bacteria, a mono-ADP-ribosylating toxin (mART), that transfers the ADP-ribosyl group from NAD(+) to multiple target proteins in vitro. Also elicits cytopathic effects in mammalian cells, such as disorganization and disruption of respiratory epithelial integrity in tracheal epithelium and vacuolization in the cytoplasm of CHO and HeLa cells as well as in mice and baboons. Treatment of mice or baboons with CARDS elicits a response that is consistent with human M.pneumoniae infections and mouse models of both infection and intoxication, suggesting that CARDS toxin is sufficient to cause prolonged inflammatory responses and airway dysfunction. Treatment of baboons with CARDS induces a number of cytokines; G-CSF (40 fold), IL-1Ra (10 fold), IL-6 and IL-8 (333 and 100 fold, respectively), MIP-1a (5 fold), and RANTES (9 fold). Treatment of mice gives a similar response. Binds phosphatidyl choline, dipalmitoylphosphatidylcholine (DPPC) and sphingomyelin via domains D2 plus D3. Has at least 2 host receptors SFTPA1 and ANXA2. Internalized by a clathrin-mediated process; protein is rapidly taken up at 37 degrees Celsius. Clathrin-independent or caveolin-dependent endocytosis were not detected. In HeLa cells internalized CARDS trafficks toward the nucleus by retrograde transport from early to late endosomes, then the Golgi apparatus; at 16 hours most toxin is concentrated in the perinuclear region in the host endoplasmic reticulum (ER). Failure to localize to the host ER prevents ADP-ribosylation and vacuolization. An acidic compartment is required to mediate retrotransport and processing of toxin into an N-terminal fragment with mART activity and a C-terminal fragment that is able to induce vacuolization. Its function is as follows. Induces the host NLRP3 inflammasome to release interleukin-1 beta (IL-1 beta); IL-1 beta release requires ADP-ribosylation activity and uptake by host macrophages. In the host colocalizes with the NLRP3 inflammasome; ADP-ribosylates NLRP3 in vitro. ADP-ribosylation of NLRP3 may lead to hyperinflammation. This chain is ADP-ribosylating toxin CARDS, found in Mycoplasma pneumoniae (strain ATCC 29342 / M129 / Subtype 1) (Mycoplasmoides pneumoniae).